Reading from the N-terminus, the 430-residue chain is N-lysine methyltransferase SMYD2-B (430 aa).

The region spanning 5 to 239 (EGLERFDSPG…AGEEVFTSYI (235 aa)) is the SET domain. Residue 15–17 (KGR) participates in S-adenosyl-L-methionine binding. Zn(2+)-binding residues include cysteine 50, cysteine 53, cysteine 63, cysteine 66, cysteine 72, cysteine 76, histidine 84, and cysteine 88. Residues 50-88 (CDFCFTRKEGLSKCGKCKQAFYCNVDCQKGDWPMHKLEC) form an MYND-type zinc finger. Residues histidine 135, 204–205 (NH), and 256–258 (YFF) each bind S-adenosyl-L-methionine.

It belongs to the class V-like SAM-binding methyltransferase superfamily.

The protein resides in the cytoplasm. The protein localises to the cytosol. It localises to the nucleus. It catalyses the reaction L-lysyl(4)-[histone H3] + 3 S-adenosyl-L-methionine = N(6),N(6),N(6)-trimethyl-L-lysyl(4)-[histone H3] + 3 S-adenosyl-L-homocysteine + 3 H(+). The catalysed reaction is L-lysyl-[protein] + S-adenosyl-L-methionine = N(6)-methyl-L-lysyl-[protein] + S-adenosyl-L-homocysteine + H(+). Its function is as follows. Protein-lysine N-methyltransferase that methylates both histones and non-histone proteins, including p53/TP53 and RB1. Specifically trimethylates histone H3 'Lys-4' (H3K4me3) in vivo. The activity requires interaction with HSP90alpha. Shows even higher methyltransferase activity on p53/TP53. Monomethylates 'Lys-370' of p53/TP53, leading to decreased DNA-binding activity and subsequent transcriptional regulation activity of p53/TP53. Monomethylates RB1 at 'Lys-860'. In Xenopus laevis (African clawed frog), this protein is N-lysine methyltransferase SMYD2-B (smyd2-b).